The sequence spans 404 residues: Glucose-1-phosphate adenylyltransferase (404 aa).

Alpha-D-glucose 1-phosphate contacts are provided by residues tyrosine 99, glycine 164, 179–180, and serine 197; that span reads EK.

The protein belongs to the bacterial/plant glucose-1-phosphate adenylyltransferase family.

It catalyses the reaction alpha-D-glucose 1-phosphate + ATP + H(+) = ADP-alpha-D-glucose + diphosphate. Its pathway is capsule biogenesis; capsule polysaccharide biosynthesis. It functions in the pathway glycan biosynthesis; glycogen biosynthesis. In terms of biological role, involved in the biosynthesis of ADP-glucose, a building block, required in the biosynthesis of maltose-1-phosphate (M1P) and in the elongation reactions to produce linear alpha-1,4-glucans. Catalyzes the reaction between ATP and alpha-D-glucose 1-phosphate (G1P) to produce pyrophosphate and ADP-Glc. The polypeptide is Glucose-1-phosphate adenylyltransferase (Mycobacteroides abscessus (strain ATCC 19977 / DSM 44196 / CCUG 20993 / CIP 104536 / JCM 13569 / NCTC 13031 / TMC 1543 / L948) (Mycobacterium abscessus)).